The sequence spans 212 residues: MTHSKRWLEEHEKDPYVKRAKKEGYPSRAAYKLLEIHQKYKLFKPSMNVIDLGAAPGGWSQVAKDLVGPKGVVIAIDLLPMQSMLDVIFIQGDFNEPEIFNQLEAIVAKKTLTGQVDLVISDMAPNISGIKNVDQSRSLHLVELAWDCAQKLLARGGTFLVKVFQGPGVDRFLINLRPYFNQVKFLKPSASRSRSSEIYILAGEFLGYNQRV.

Residues G57, W59, D77, D93, and D122 each contribute to the S-adenosyl-L-methionine site. The active-site Proton acceptor is K162.

This sequence belongs to the class I-like SAM-binding methyltransferase superfamily. RNA methyltransferase RlmE family.

The protein resides in the cytoplasm. The enzyme catalyses uridine(2552) in 23S rRNA + S-adenosyl-L-methionine = 2'-O-methyluridine(2552) in 23S rRNA + S-adenosyl-L-homocysteine + H(+). In terms of biological role, specifically methylates the uridine in position 2552 of 23S rRNA at the 2'-O position of the ribose in the fully assembled 50S ribosomal subunit. This chain is Ribosomal RNA large subunit methyltransferase E, found in Coxiella burnetii (strain RSA 493 / Nine Mile phase I).